We begin with the raw amino-acid sequence, 845 residues long: Ribonucleoside-diphosphate reductase subunit alpha (845 aa).

An ATP-cone domain is found at 1–98; it reads MHIIKRNGEP…LYRDDRTKKR (98 aa). Residues threonine 303, 318 to 319, glycine 347, 534 to 538, and 725 to 729 each bind substrate; these read SC, NLCTE, and PTSST. Cysteine 319 and cysteine 574 are oxidised to a cystine. Residue asparagine 534 is the Proton acceptor of the active site. Cysteine 536 (cysteine radical intermediate) is an active-site residue. The Proton acceptor role is filled by glutamate 538.

The protein belongs to the ribonucleoside diphosphate reductase large chain family. In terms of assembly, tetramer of two alpha and two beta subunits.

It catalyses the reaction a 2'-deoxyribonucleoside 5'-diphosphate + [thioredoxin]-disulfide + H2O = a ribonucleoside 5'-diphosphate + [thioredoxin]-dithiol. Its activity is regulated as follows. Under complex allosteric control mediated by deoxynucleoside triphosphates and ATP binding. The type of nucleotide bound at the specificity site determines substrate preference. It seems probable that ATP makes the enzyme reduce CDP and UDP, dGTP favors ADP reduction and dTTP favors GDP reduction. Functionally, provides the precursors necessary for DNA synthesis. Catalyzes the biosynthesis of deoxyribonucleotides from the corresponding ribonucleotides. The polypeptide is Ribonucleoside-diphosphate reductase subunit alpha (nrdA) (Treponema pallidum (strain Nichols)).